A 642-amino-acid chain; its full sequence is Threonine--tRNA ligase (642 aa).

The region spanning 1-61 (MPVIRFYDGS…REDAFIEFVD (61 aa)) is the TGS domain. The segment at 243–534 (DHRKIGKFLQ…LIEECSGNLP (292 aa)) is catalytic. Zn(2+)-binding residues include Cys334, His385, and His511.

The protein belongs to the class-II aminoacyl-tRNA synthetase family. As to quaternary structure, homodimer. Zn(2+) serves as cofactor.

The protein resides in the cytoplasm. The catalysed reaction is tRNA(Thr) + L-threonine + ATP = L-threonyl-tRNA(Thr) + AMP + diphosphate + H(+). Functionally, catalyzes the attachment of threonine to tRNA(Thr) in a two-step reaction: L-threonine is first activated by ATP to form Thr-AMP and then transferred to the acceptor end of tRNA(Thr). Also edits incorrectly charged L-seryl-tRNA(Thr). The chain is Threonine--tRNA ligase from Buchnera aphidicola subsp. Acyrthosiphon pisum (strain Tuc7).